The primary structure comprises 342 residues: Holliday junction branch migration complex subunit RuvB (342 aa).

Residues 1–182 (MRIEALNTAP…FGINSRLDYY (182 aa)) form a large ATPase domain (RuvB-L) region. ATP-binding positions include Ile21, Arg22, Gly63, Lys66, Thr67, Thr68, 129–131 (EDY), Arg172, Tyr182, and Arg219. Thr67 provides a ligand contact to Mg(2+). A small ATPAse domain (RuvB-S) region spans residues 183 to 253 (SPELLQSIIV…VARRTLESLE (71 aa)). The interval 256-342 (EGGLDDMDKK…DHGPLFDHNS (87 aa)) is head domain (RuvB-H). Residues Arg311 and Arg316 each coordinate DNA.

It belongs to the RuvB family. In terms of assembly, homohexamer. Forms an RuvA(8)-RuvB(12)-Holliday junction (HJ) complex. HJ DNA is sandwiched between 2 RuvA tetramers; dsDNA enters through RuvA and exits via RuvB. An RuvB hexamer assembles on each DNA strand where it exits the tetramer. Each RuvB hexamer is contacted by two RuvA subunits (via domain III) on 2 adjacent RuvB subunits; this complex drives branch migration. In the full resolvosome a probable DNA-RuvA(4)-RuvB(12)-RuvC(2) complex forms which resolves the HJ.

The protein resides in the cytoplasm. It carries out the reaction ATP + H2O = ADP + phosphate + H(+). The RuvA-RuvB-RuvC complex processes Holliday junction (HJ) DNA during genetic recombination and DNA repair, while the RuvA-RuvB complex plays an important role in the rescue of blocked DNA replication forks via replication fork reversal (RFR). RuvA specifically binds to HJ cruciform DNA, conferring on it an open structure. The RuvB hexamer acts as an ATP-dependent pump, pulling dsDNA into and through the RuvAB complex. RuvB forms 2 homohexamers on either side of HJ DNA bound by 1 or 2 RuvA tetramers; 4 subunits per hexamer contact DNA at a time. Coordinated motions by a converter formed by DNA-disengaged RuvB subunits stimulates ATP hydrolysis and nucleotide exchange. Immobilization of the converter enables RuvB to convert the ATP-contained energy into a lever motion, pulling 2 nucleotides of DNA out of the RuvA tetramer per ATP hydrolyzed, thus driving DNA branch migration. The RuvB motors rotate together with the DNA substrate, which together with the progressing nucleotide cycle form the mechanistic basis for DNA recombination by continuous HJ branch migration. Branch migration allows RuvC to scan DNA until it finds its consensus sequence, where it cleaves and resolves cruciform DNA. This chain is Holliday junction branch migration complex subunit RuvB, found in Chlorobaculum parvum (strain DSM 263 / NCIMB 8327) (Chlorobium vibrioforme subsp. thiosulfatophilum).